The sequence spans 151 residues: Peptide deformylase (151 aa).

2 residues coordinate Fe cation: Cys88 and His130. Glu131 is a catalytic residue. His134 is a binding site for Fe cation.

The protein belongs to the polypeptide deformylase family. The cofactor is Fe(2+).

It catalyses the reaction N-terminal N-formyl-L-methionyl-[peptide] + H2O = N-terminal L-methionyl-[peptide] + formate. Functionally, removes the formyl group from the N-terminal Met of newly synthesized proteins. Requires at least a dipeptide for an efficient rate of reaction. N-terminal L-methionine is a prerequisite for activity but the enzyme has broad specificity at other positions. The chain is Peptide deformylase from Heliobacterium modesticaldum (strain ATCC 51547 / Ice1).